A 643-amino-acid polypeptide reads, in one-letter code: Replication protein E1 (643 aa).

Residues 28–60 form a disordered region; sequence THGQSQVSSDEDEDETETREDLDFIDNRVPGDG. Positions 36–45 are enriched in acidic residues; it reads SDEDEDETET. The short motif at 84–86 is the Nuclear localization signal element; the sequence is KRK. Phosphoserine; by host occurs at positions 90 and 103. A Nuclear export signal motif is present at residues 102–111; sequence LSPRLDAISL. The segment at 119-179 is disordered; it reads KRRLFETEPP…EADLTVHTPQ (61 aa). Basic and acidic residues predominate over residues 157 to 167; that stretch reads VDVREEERQGG. Residues 180-346 are DNA-binding region; the sequence is SGTDAAGSVL…QTLIGHSMED (167 aa). Residues 445-595 form the SF3 helicase domain; sequence VEFVSFLAAF…FPFASPGEPL (151 aa). 471–478 lines the ATP pocket; it reads GPADTGKS. Lys552 participates in a covalent cross-link: Glycyl lysine isopeptide (Lys-Gly) (interchain with G-Cter in SUMO).

The protein belongs to the papillomaviridae E1 protein family. Can form hexamers. Interacts with E2 protein; this interaction increases E1 DNA binding specificity. Interacts with host DNA polymerase subunit POLA2. Interacts with host single stranded DNA-binding protein RPA1. Interacts with host TOP1; this interaction stimulates the enzymatic activity of TOP1. Phosphorylated. Post-translationally, sumoylated.

Its subcellular location is the host nucleus. The catalysed reaction is Couples ATP hydrolysis with the unwinding of duplex DNA by translocating in the 3'-5' direction.. It catalyses the reaction ATP + H2O = ADP + phosphate + H(+). Its function is as follows. ATP-dependent DNA 3'-5' helicase required for initiation of viral DNA replication. It forms a complex with the viral E2 protein. The E1-E2 complex binds to the replication origin which contains binding sites for both proteins. During the initial step, a dimer of E1 interacts with a dimer of protein E2 leading to a complex that binds the viral origin of replication with high specificity. Then, a second dimer of E1 displaces the E2 dimer in an ATP-dependent manner to form the E1 tetramer. Following this, two E1 monomers are added to each half of the site, which results in the formation of two E1 trimers on the viral ori. Subsequently, two hexamers will be created. The double hexamer acts as a bi-directional helicase machinery and unwinds the viral DNA and then recruits the host DNA polymerase to start replication. The polypeptide is Replication protein E1 (Human papillomavirus 57).